The chain runs to 347 residues: Phosphoribosylformylglycinamidine cyclo-ligase (347 aa).

Belongs to the AIR synthase family.

The protein localises to the cytoplasm. The catalysed reaction is 2-formamido-N(1)-(5-O-phospho-beta-D-ribosyl)acetamidine + ATP = 5-amino-1-(5-phospho-beta-D-ribosyl)imidazole + ADP + phosphate + H(+). Its pathway is purine metabolism; IMP biosynthesis via de novo pathway; 5-amino-1-(5-phospho-D-ribosyl)imidazole from N(2)-formyl-N(1)-(5-phospho-D-ribosyl)glycinamide: step 2/2. This is Phosphoribosylformylglycinamidine cyclo-ligase from Alkaliphilus metalliredigens (strain QYMF).